The sequence spans 302 residues: Phosphoribosylaminoimidazole-succinocarboxamide synthase (302 aa).

Belongs to the SAICAR synthetase family.

It carries out the reaction 5-amino-1-(5-phospho-D-ribosyl)imidazole-4-carboxylate + L-aspartate + ATP = (2S)-2-[5-amino-1-(5-phospho-beta-D-ribosyl)imidazole-4-carboxamido]succinate + ADP + phosphate + 2 H(+). It participates in purine metabolism; IMP biosynthesis via de novo pathway; 5-amino-1-(5-phospho-D-ribosyl)imidazole-4-carboxamide from 5-amino-1-(5-phospho-D-ribosyl)imidazole-4-carboxylate: step 1/2. This is Phosphoribosylaminoimidazole-succinocarboxamide synthase from Ralstonia nicotianae (strain ATCC BAA-1114 / GMI1000) (Ralstonia solanacearum).